The chain runs to 222 residues: MERIEGASVGRCAASPYLRPLTLHYRQNGAQKSWDFMKTHDSVTVLLFNSSRRSLVLVKQFRPAVYAGEVERRFPGSLAAVDQDGPRELQPALPGSAGVTVELCAGLVDQPGLSLEEVACKEAWEECGYHLAPSDLRRVATYWSGVGLTGSRQTMFYTEVTDAQRSGPGGGLVEEGELIEVVHLPLEGAQAFADDPDIPKTLGVIFGVSWFLSQVAPNLDLQ.

Residues 38–206 (KTHDSVTVLL…DIPKTLGVIF (169 aa)) enclose the Nudix hydrolase domain. A Nudix box motif is present at residues 111–129 (PGLSLEEVACKEAWEECGY).

This sequence belongs to the Nudix hydrolase family. As to quaternary structure, homodimer. Mg(2+) serves as cofactor.

Its subcellular location is the cytoplasm. It catalyses the reaction UDP-sugar + H2O = UMP + alpha-D-aldose 1-phosphate.. In terms of biological role, hydrolyzes UDP-glucose to glucose 1-phosphate and UMP and ADP-ribose to ribose 5-phosphate and AMP. The physiological substrate is probably UDP-glucose. Poor activity on other substrates such as ADP-glucose, CDP-glucose, GDP-glucose and GDP-mannose. In Homo sapiens (Human), this protein is Uridine diphosphate glucose pyrophosphatase NUDT14 (NUDT14).